The following is a 495-amino-acid chain: Meiosis-specific nuclear structural protein 1 (495 aa).

Residues 1 to 314 are interaction with BBOF1; the sequence is MASKRRNMSC…KLEEMLRQRE (314 aa). A coiled-coil region spans residues 59 to 410; that stretch reads LLQNEQFELD…QLEHRRAVEK (352 aa). Y188 carries the phosphotyrosine modification.

The protein belongs to the MNS1 family. In terms of assembly, able to form oligomers. Microtubule inner protein component of sperm flagellar doublet microtubules. Interacts with ODAD1. Interacts with BBOF1.

It localises to the nucleus. Its subcellular location is the cytoplasm. The protein resides in the cytoskeleton. The protein localises to the cilium axoneme. It is found in the flagellum axoneme. Its function is as follows. Microtubule inner protein (MIP) part of the dynein-decorated doublet microtubules (DMTs) in cilia axoneme, which is required for motile cilia beating. May play a role in the control of meiotic division and germ cell differentiation through regulation of pairing and recombination during meiosis. Required for sperm flagella assembly. May play a role in the assembly and function of the outer dynein arm-docking complex (ODA-DC). ODA-DC mediates outer dynein arms (ODA) binding onto the axonemal doublet microtubules. The sequence is that of Meiosis-specific nuclear structural protein 1 (MNS1) from Macaca fascicularis (Crab-eating macaque).